The following is a 352-amino-acid chain: Transcription factor MYB86 (352 aa).

HTH myb-type domains lie at 9-61 (KQKL…INYL) and 62-116 (RPDL…KKKL). DNA-binding regions (H-T-H motif) lie at residues 37–61 (WSSV…INYL) and 89–112 (WSQI…NSCL).

In terms of tissue distribution, expressed in stems, flowers and seeds. Weakly expressed in leaves and roots.

It localises to the nucleus. In terms of biological role, probable transcription factor. The sequence is that of Transcription factor MYB86 (MYB86) from Arabidopsis thaliana (Mouse-ear cress).